A 1229-amino-acid polypeptide reads, in one-letter code: Vacuolar protein sorting-associated protein 8 homolog (1229 aa).

Residues 67–89 form a disordered region; it reads EFGMPVPHATPTPSIGEDSTIRT. One copy of the CHCR repeat lies at 901–1063; sequence ETTRLLSLHY…ILPHQELQSI (163 aa). The RING-type; atypical zinc finger occupies 1148–1189; that stretch reads CSMCRQRLYDHSQVLIFGGCGHGIHEQCMEESETQFEECPRC.

This sequence belongs to the VPS8 family. In terms of assembly, component of the class C core vacuole/endosome tethering (CORVET) complex composed of at least Vps8, dor/Vps18, car/Vps33A and Vps16A; unlike in other species, Vps11 is not part of the Drosophila complex. Due to the reduced number of components the Drosophila CORVET complex is often referred to as the miniCORVET complex. Has a higher affinity than the homotypic fusion and vacuole protein sorting (HOPS) tethering complex-specific component lt/Vps41 for Vps16A, car/Vps33A and dor/Vps18, the core components shared by both tethering complexes.

The protein resides in the early endosome. Functionally, part of the class C core vacuole/endosome tethering (CORVET) complex involved in endo-lysosomal vesicle trafficking and lysosome biogenesis by facilitating docking and fusion of endosomal vesicles. The CORVET complex acts upstream of the homotypic fusion and vacuole protein sorting (HOPS) tethering complex but is not involved in autophagic flux. The CORVET complex may cooperate with the early endosomal tether Rbsn-5 to mediate endosomal fusion. As part of the CORVET complex recruited to endosomes by activated GTP-bound Rab5. Specifically required for endocytic trafficking in a subset of cells, such as hemocytes and nephrocytes, which are highly active in endocytosis. The protein is Vacuolar protein sorting-associated protein 8 homolog of Drosophila melanogaster (Fruit fly).